Reading from the N-terminus, the 141-residue chain is Hemoglobin subunit alpha-A (141 aa).

Positions 1-141 constitute a Globin domain; it reads VLSAADKTNV…VGTVLTAKYR (141 aa). Position 58 (His-58) interacts with O2. His-87 is a binding site for heme b.

The protein belongs to the globin family. As to quaternary structure, heterotetramer of two alpha chains and two beta chains. In terms of tissue distribution, red blood cells.

Its function is as follows. Involved in oxygen transport from the lung to the various peripheral tissues. This chain is Hemoglobin subunit alpha-A (HBAA), found in Branta canadensis (Canada goose).